Here is a 258-residue protein sequence, read N- to C-terminus: Putative cysteine-rich repeat secretory protein 35 (258 aa).

An N-terminal signal peptide occupies residues 1-29; it reads MYSSYSLSKRLIYVPILAIQFLLVRSVSS. Gnk2-homologous domains lie at 36–138 and 146–255; these read YLNH…TIKP and FKNT…LYPF.

It belongs to the cysteine-rich repeat secretory protein family.

It is found in the secreted. The polypeptide is Putative cysteine-rich repeat secretory protein 35 (CRRSP35) (Arabidopsis thaliana (Mouse-ear cress)).